The primary structure comprises 238 residues: Large ribosomal subunit protein uL2 (238 aa).

The tract at residues 203–223 is disordered; sequence GGGAWKHPGKPTTVSRNAPPG.

It belongs to the universal ribosomal protein uL2 family. As to quaternary structure, part of the 50S ribosomal subunit. Forms a bridge to the 30S subunit in the 70S ribosome.

Its function is as follows. One of the primary rRNA binding proteins. Required for association of the 30S and 50S subunits to form the 70S ribosome, for tRNA binding and peptide bond formation. It has been suggested to have peptidyltransferase activity; this is somewhat controversial. Makes several contacts with the 16S rRNA in the 70S ribosome. This chain is Large ribosomal subunit protein uL2, found in Methanosarcina barkeri (strain Fusaro / DSM 804).